A 550-amino-acid chain; its full sequence is Iduronate 2-sulfatase (550 aa).

An N-terminal signal peptide occupies residues 1–25 (MPPPRTGRGLLWLGLVLSSVCVALG). Residues 26–33 (SETQANST) constitute a propeptide that is removed on maturation. Ca(2+)-binding residues include aspartate 45, aspartate 46, and cysteine 84. The Nucleophile role is filled by cysteine 84. Cysteine 84 bears the 3-oxoalanine (Cys) mark. Asparagine 115 carries N-linked (GlcNAc...) asparagine glycosylation. Residue histidine 138 is part of the active site. N-linked (GlcNAc...) asparagine glycosylation is present at asparagine 144. A disulfide bridge connects residues cysteine 171 and cysteine 184. N-linked (GlcNAc...) asparagine glycosylation is found at asparagine 246, asparagine 280, and asparagine 325. Positions 334 and 335 each coordinate Ca(2+). A disulfide bridge connects residues cysteine 422 and cysteine 432. N-linked (GlcNAc...) asparagine glycans are attached at residues asparagine 513 and asparagine 537.

This sequence belongs to the sulfatase family. Monomer. The 58-kDa mature form is composed of two chains resulting from proteolitic processing, the 42-kDa chain and the 14-kDa chain that remain stably associated and form the 58-kDa intermediate form which is enzymatically active. Ca(2+) is required as a cofactor. Post-translationally, synthesized as a 75-kDa precursor form in the endoplasmic reticulum (ER), and then processed by proteolytic cleavage through various intermediates to yield a 55-kDa mature form, with the release of an 18 kDa polypeptide. The conversion to 3-oxoalanine (also known as C-formylglycine, FGly), of a serine or cysteine residue in prokaryotes and of a cysteine residue in eukaryotes, is critical for catalytic activity. Liver, kidney, lung, and placenta.

The protein resides in the lysosome. It carries out the reaction Hydrolysis of the 2-sulfate groups of the L-iduronate 2-sulfate units of dermatan sulfate, heparan sulfate and heparin.. Its function is as follows. Lysosomal enzyme involved in the degradation pathway of dermatan sulfate and heparan sulfate. The sequence is that of Iduronate 2-sulfatase (IDS) from Homo sapiens (Human).